The chain runs to 338 residues: tRNA N6-adenosine threonylcarbamoyltransferase (338 aa).

The Fe cation site is built by His-111 and His-115. Residues 134-138 (LLSGG), Asp-167, Gly-180, and Asn-275 each bind substrate. Residue Asp-304 coordinates Fe cation.

Belongs to the KAE1 / TsaD family. It depends on Fe(2+) as a cofactor.

The protein resides in the cytoplasm. The enzyme catalyses L-threonylcarbamoyladenylate + adenosine(37) in tRNA = N(6)-L-threonylcarbamoyladenosine(37) in tRNA + AMP + H(+). Required for the formation of a threonylcarbamoyl group on adenosine at position 37 (t(6)A37) in tRNAs that read codons beginning with adenine. Is involved in the transfer of the threonylcarbamoyl moiety of threonylcarbamoyl-AMP (TC-AMP) to the N6 group of A37, together with TsaE and TsaB. TsaD likely plays a direct catalytic role in this reaction. The polypeptide is tRNA N6-adenosine threonylcarbamoyltransferase (Leptospira interrogans serogroup Icterohaemorrhagiae serovar copenhageni (strain Fiocruz L1-130)).